The chain runs to 397 residues: Acetate kinase (397 aa).

Asn-8 contributes to the Mg(2+) binding site. Lys-15 is an ATP binding site. Arg-89 contributes to the substrate binding site. Asp-146 (proton donor/acceptor) is an active-site residue. Residues 206 to 210 (HLGNG), 281 to 283 (DLR), and 329 to 333 (GVGEN) each bind ATP. Glu-382 is a binding site for Mg(2+).

This sequence belongs to the acetokinase family. Homodimer. It depends on Mg(2+) as a cofactor. The cofactor is Mn(2+).

The protein resides in the cytoplasm. It catalyses the reaction acetate + ATP = acetyl phosphate + ADP. It participates in metabolic intermediate biosynthesis; acetyl-CoA biosynthesis; acetyl-CoA from acetate: step 1/2. Catalyzes the formation of acetyl phosphate from acetate and ATP. Can also catalyze the reverse reaction. This Bacillus cereus (strain ATCC 10987 / NRS 248) protein is Acetate kinase.